The chain runs to 67 residues: Large ribosomal subunit protein uL29 (67 aa).

This sequence belongs to the universal ribosomal protein uL29 family.

In Cereibacter sphaeroides (strain ATCC 17025 / ATH 2.4.3) (Rhodobacter sphaeroides), this protein is Large ribosomal subunit protein uL29.